Reading from the N-terminus, the 37-residue chain is MRVSASVKTICRNCKVIRRKGVVRVICTDPRHKQRQG.

The protein belongs to the bacterial ribosomal protein bL36 family.

The protein is Large ribosomal subunit protein bL36 of Variovorax paradoxus (strain S110).